The chain runs to 156 residues: Small ribosomal subunit protein uS7 (156 aa).

Belongs to the universal ribosomal protein uS7 family. As to quaternary structure, part of the 30S ribosomal subunit. Contacts proteins S9 and S11.

In terms of biological role, one of the primary rRNA binding proteins, it binds directly to 16S rRNA where it nucleates assembly of the head domain of the 30S subunit. Is located at the subunit interface close to the decoding center, probably blocks exit of the E-site tRNA. The protein is Small ribosomal subunit protein uS7 of Saccharophagus degradans (strain 2-40 / ATCC 43961 / DSM 17024).